We begin with the raw amino-acid sequence, 356 residues long: UDP-N-acetylglucosamine--N-acetylmuramyl-(pentapeptide) pyrophosphoryl-undecaprenol N-acetylglucosamine transferase (356 aa).

Residues 12 to 14 (TGG), N124, R163, S188, I242, and Q287 contribute to the UDP-N-acetyl-alpha-D-glucosamine site.

This sequence belongs to the glycosyltransferase 28 family. MurG subfamily.

The protein localises to the cell inner membrane. The enzyme catalyses di-trans,octa-cis-undecaprenyl diphospho-N-acetyl-alpha-D-muramoyl-L-alanyl-D-glutamyl-meso-2,6-diaminopimeloyl-D-alanyl-D-alanine + UDP-N-acetyl-alpha-D-glucosamine = di-trans,octa-cis-undecaprenyl diphospho-[N-acetyl-alpha-D-glucosaminyl-(1-&gt;4)]-N-acetyl-alpha-D-muramoyl-L-alanyl-D-glutamyl-meso-2,6-diaminopimeloyl-D-alanyl-D-alanine + UDP + H(+). The protein operates within cell wall biogenesis; peptidoglycan biosynthesis. In terms of biological role, cell wall formation. Catalyzes the transfer of a GlcNAc subunit on undecaprenyl-pyrophosphoryl-MurNAc-pentapeptide (lipid intermediate I) to form undecaprenyl-pyrophosphoryl-MurNAc-(pentapeptide)GlcNAc (lipid intermediate II). The sequence is that of UDP-N-acetylglucosamine--N-acetylmuramyl-(pentapeptide) pyrophosphoryl-undecaprenol N-acetylglucosamine transferase from Pseudomonas syringae pv. tomato (strain ATCC BAA-871 / DC3000).